Consider the following 137-residue polypeptide: DNA polymerase III subunit psi (137 aa).

Belongs to the DNA polymerase III psi/HolD chain family. The DNA polymerase III holoenzyme complex contains at least 10 different subunits organized into 3 functionally essential subassemblies: the Pol III core, the beta sliding clamp processivity factor and the clamp-loading complex. The Pol III core (subunits alpha, epsilon and theta) contains the polymerase and the 3'-5' exonuclease proofreading activities. The polymerase is tethered to the template via the dimeric beta sliding clamp processivity factor. The clamp-loading complex (also called gamma complex) assembles the beta sliding clamp onto the primed template and plays a central role in the organization and communication at the replication fork. The clamp-loading complex contains delta, delta', psi and chi, and 3 copies of either or both of two different DnaX proteins, gamma and tau. The DNA replisome complex has a single clamp loader (3 tau and 1 each of delta, delta', psi and chi subunits) which binds 3 Pol III cores (1 core on the leading strand and 2 on the lagging strand) each with a beta sliding clamp dimer. Additional proteins in the replisome are other copies of gamma, psi (this protein) and chi (holC), SSB, DNA helicase and RNA primase. The clamp loader hydrolyzes ATP to assemble the beta processivity factor onto the primed template and plays a central role in the organization and communication at the replication fork. Interacts directly with the chi subunit (holC).

The catalysed reaction is DNA(n) + a 2'-deoxyribonucleoside 5'-triphosphate = DNA(n+1) + diphosphate. Its function is as follows. Part of the beta sliding clamp loading complex, which hydrolyzes ATP to load the beta clamp onto primed DNA to form the DNA replication pre-initiation complex. DNA polymerase III is a complex, multichain enzyme responsible for most of the replicative synthesis in bacteria. This DNA polymerase also exhibits 3' to 5' exonuclease activity. This is DNA polymerase III subunit psi from Escherichia coli (strain K12).